Consider the following 413-residue polypeptide: Divalent metal cation transporter MntH (413 aa).

11 helical membrane passes run 19-39 (FALM…GNFA), 49-69 (GYQL…IQLM), 94-114 (VWFY…AEFI), 122-142 (LVFG…TFLI), 155-175 (LVIG…LFFS), 196-216 (AVLL…IYLH), 240-260 (VAIA…TAAA), 287-307 (AAAL…TVVG), 323-343 (IPLL…ILAG), 349-369 (ILVM…IPLL), and 393-413 (LIVV…ALNL).

Belongs to the NRAMP family.

It localises to the cell inner membrane. Functionally, h(+)-stimulated, divalent metal cation uptake system. This chain is Divalent metal cation transporter MntH, found in Erwinia tasmaniensis (strain DSM 17950 / CFBP 7177 / CIP 109463 / NCPPB 4357 / Et1/99).